Reading from the N-terminus, the 104-residue chain is Protein MGF 110-2L (104 aa).

The N-terminal stretch at 1–31 is a signal peptide; that stretch reads MRFFSYLGLLLAGLTSLQGFSTDNLLEEELR.

This sequence belongs to the asfivirus MGF 110 family.

Plays a role in virus cell tropism, and may be required for efficient virus replication in macrophages. The polypeptide is Protein MGF 110-2L (African swine fever virus (strain Badajoz 1971 Vero-adapted) (Ba71V)).